A 499-amino-acid chain; its full sequence is Probable malate:quinone oxidoreductase 4 (499 aa).

It belongs to the MQO family. The cofactor is FAD.

It catalyses the reaction (S)-malate + a quinone = a quinol + oxaloacetate. The protein operates within carbohydrate metabolism; tricarboxylic acid cycle; oxaloacetate from (S)-malate (quinone route): step 1/1. This Staphylococcus epidermidis (strain ATCC 12228 / FDA PCI 1200) protein is Probable malate:quinone oxidoreductase 4.